The primary structure comprises 295 residues: Ethanolamine ammonia-lyase small subunit (295 aa).

The adenosylcob(III)alamin site is built by Val-208 and Glu-229.

It belongs to the EutC family. The basic unit is a heterodimer which dimerizes to form tetramers. The heterotetramers trimerize; 6 large subunits form a core ring with 6 small subunits projecting outwards. Adenosylcob(III)alamin serves as cofactor.

Its subcellular location is the bacterial microcompartment. It carries out the reaction ethanolamine = acetaldehyde + NH4(+). It participates in amine and polyamine degradation; ethanolamine degradation. In terms of biological role, catalyzes the deamination of various vicinal amino-alcohols to oxo compounds. Allows this organism to utilize ethanolamine as the sole source of nitrogen and carbon in the presence of external vitamin B12. This Fusobacterium nucleatum subsp. nucleatum (strain ATCC 25586 / DSM 15643 / BCRC 10681 / CIP 101130 / JCM 8532 / KCTC 2640 / LMG 13131 / VPI 4355) protein is Ethanolamine ammonia-lyase small subunit.